We begin with the raw amino-acid sequence, 481 residues long: Proline--tRNA ligase (481 aa).

The protein belongs to the class-II aminoacyl-tRNA synthetase family. ProS type 3 subfamily. As to quaternary structure, homodimer.

Its subcellular location is the cytoplasm. The enzyme catalyses tRNA(Pro) + L-proline + ATP = L-prolyl-tRNA(Pro) + AMP + diphosphate. Catalyzes the attachment of proline to tRNA(Pro) in a two-step reaction: proline is first activated by ATP to form Pro-AMP and then transferred to the acceptor end of tRNA(Pro). The protein is Proline--tRNA ligase of Prosthecochloris aestuarii (strain DSM 271 / SK 413).